Reading from the N-terminus, the 548-residue chain is Membrane protein insertase YidC (548 aa).

The helical transmembrane segment at 6 to 26 threads the bilayer; that stretch reads NLLVIALLFVSFMIWQAWEQD. The disordered stretch occupies residues 28–56; it reads NPQPQTQQTTQTTTTAAGSAADQGVPASG. Residues 29-42 are compositionally biased toward low complexity; it reads PQPQTQQTTQTTTT. The next 4 helical transmembrane spans lie at 350 to 370, 424 to 444, 458 to 478, and 499 to 519; these read FVGN…GIMY, FPLI…MGSI, LSAQ…MFFI, and PVIF…YYIV.

This sequence belongs to the OXA1/ALB3/YidC family. Type 1 subfamily. In terms of assembly, interacts with the Sec translocase complex via SecD. Specifically interacts with transmembrane segments of nascent integral membrane proteins during membrane integration.

It localises to the cell inner membrane. Its function is as follows. Required for the insertion and/or proper folding and/or complex formation of integral membrane proteins into the membrane. Involved in integration of membrane proteins that insert both dependently and independently of the Sec translocase complex, as well as at least some lipoproteins. Aids folding of multispanning membrane proteins. The chain is Membrane protein insertase YidC from Salmonella choleraesuis (strain SC-B67).